Consider the following 141-residue polypeptide: MAKKVVSVIKLALQAGKANPAPPVGPALGQHGVNIMAFCKEYNARTQDKAGLVIPVEISVFEDRSFTFITKTPPASVLITKAAGIEKGSGESAHGKVGSLSRSQLEEIAKTKLPDLNCTSIESAMRIIEGTARNMGVSISD.

It belongs to the universal ribosomal protein uL11 family. Part of the ribosomal stalk of the 50S ribosomal subunit. Interacts with L10 and the large rRNA to form the base of the stalk. L10 forms an elongated spine to which L12 dimers bind in a sequential fashion forming a multimeric L10(L12)X complex. One or more lysine residues are methylated.

In terms of biological role, forms part of the ribosomal stalk which helps the ribosome interact with GTP-bound translation factors. This is Large ribosomal subunit protein uL11 from Prochlorococcus marinus (strain MIT 9313).